The sequence spans 96 residues: DNA-directed RNA polymerase subunit Rpo11 (96 aa).

The protein belongs to the archaeal Rpo11/eukaryotic RPB11/RPC19 RNA polymerase subunit family. In terms of assembly, part of the RNA polymerase complex.

Its subcellular location is the cytoplasm. It carries out the reaction RNA(n) + a ribonucleoside 5'-triphosphate = RNA(n+1) + diphosphate. Its function is as follows. DNA-dependent RNA polymerase (RNAP) catalyzes the transcription of DNA into RNA using the four ribonucleoside triphosphates as substrates. The polypeptide is DNA-directed RNA polymerase subunit Rpo11 (Methanococcus maripaludis (strain C6 / ATCC BAA-1332)).